Consider the following 485-residue polypeptide: G2/mitotic-specific cyclin-A1 (485 aa).

The disordered stretch occupies residues 1 to 24 (MRSALSLKPSNGNAAKSQAVNNKN). The span at 8–24 (KPSNGNAAKSQAVNNKN) shows a compositional bias: polar residues.

It belongs to the cyclin family. Cyclin AB subfamily. In terms of tissue distribution, expressed in the cell lineages ABarp, C and E as well as the NSM neuroblasts.

In terms of biological role, involved in the control of the cell cycle after S phase. May bind to and activate cdk-1 and/or cdk-2 to promote cell cycle progression. Necessary for embryogenesis. This Caenorhabditis elegans protein is G2/mitotic-specific cyclin-A1 (cya-1).